The primary structure comprises 273 residues: Zinc finger protein 80 (273 aa).

The C2H2-type 1 zinc finger occupies Y49–H71. The segment at Y77–H99 adopts a C2H2-type 2; degenerate zinc-finger fold. The segment at C105–H127 adopts a C2H2-type 3; atypical zinc-finger fold. C2H2-type zinc fingers lie at residues Y133–H155, F161–H183, K187–H211, and Y217–H239.

The protein belongs to the krueppel C2H2-type zinc-finger protein family.

It is found in the nucleus. Functionally, may be involved in transcriptional regulation. This chain is Zinc finger protein 80 (ZNF80), found in Pan troglodytes (Chimpanzee).